A 207-amino-acid polypeptide reads, in one-letter code: Interleukin-6 (207 aa).

Residues 1-20 form the signal peptide; it reads MNSLSTSAFSLGLLLVMATA. An intrachain disulfide couples C67 to C73. Position 76 is a phosphoserine (S76). A disulfide bridge connects residues C96 and C106.

It belongs to the IL-6 superfamily. Component of a hexamer of two molecules each of IL6, IL6R and IL6ST; first binds to IL6R to associate with the signaling subunit IL6ST. Interacts with IL6R (via the N-terminal ectodomain); this interaction may be affected by IL6R-binding with SORL1, hence decreasing IL6 cis signaling. Interacts with SORL1 (via the N-terminal ectodomain); this interaction leads to IL6 internalization and lysosomal degradation. May form a trimeric complex with the soluble SORL1 ectodomain and soluble IL6R receptor; this interaction might stabilize circulating IL6, hence promoting IL6 trans signaling.

It is found in the secreted. Its function is as follows. Cytokine with a wide variety of biological functions in immunity, tissue regeneration, and metabolism. Binds to IL6R, then the complex associates to the signaling subunit IL6ST/gp130 to trigger the intracellular IL6-signaling pathway. The interaction with the membrane-bound IL6R and IL6ST stimulates 'classic signaling', whereas the binding of IL6 and soluble IL6R to IL6ST stimulates 'trans-signaling'. Alternatively, 'cluster signaling' occurs when membrane-bound IL6:IL6R complexes on transmitter cells activate IL6ST receptors on neighboring receiver cells. In terms of biological role, IL6 is a potent inducer of the acute phase response. Rapid production of IL6 contributes to host defense during infection and tissue injury, but excessive IL6 synthesis is involved in disease pathology. In the innate immune response, is synthesized by myeloid cells, such as macrophages and dendritic cells, upon recognition of pathogens through toll-like receptors (TLRs) at the site of infection or tissue injury. In the adaptive immune response, is required for the differentiation of B cells into immunoglobulin-secreting cells. Plays a major role in the differentiation of CD4(+) T cell subsets. Essential factor for the development of T follicular helper (Tfh) cells that are required for the induction of germinal-center formation. Required to drive naive CD4(+) T cells to the Th17 lineage. Also required for proliferation of myeloma cells and the survival of plasmablast cells. Functionally, acts as an essential factor in bone homeostasis and on vessels directly or indirectly by induction of VEGF, resulting in increased angiogenesis activity and vascular permeability. Induces, through 'trans-signaling' and synergistically with IL1B and TNF, the production of VEGF. Involved in metabolic controls, is discharged into the bloodstream after muscle contraction increasing lipolysis and improving insulin resistance. 'Trans-signaling' in central nervous system also regulates energy and glucose homeostasis. Mediates, through GLP-1, crosstalk between insulin-sensitive tissues, intestinal L cells and pancreatic islets to adapt to changes in insulin demand. Also acts as a myokine. Plays a protective role during liver injury, being required for maintenance of tissue regeneration. Also has a pivotal role in iron metabolism by regulating HAMP/hepcidin expression upon inflammation or bacterial infection. Through activation of IL6ST-YAP-NOTCH pathway, induces inflammation-induced epithelial regeneration. This Canis lupus familiaris (Dog) protein is Interleukin-6 (IL6).